We begin with the raw amino-acid sequence, 398 residues long: Serpin-ZX (398 aa).

An RCL region spans residues 342-366 (GTEAAARTARVVTLRSLPVEPVKVD).

The protein belongs to the serpin family. Expressed in roots, coleoptiles, shoots, leaves, embryo and endosperm.

Functionally, inhibits chymotrypsin, cathepsin G and trypsin in vitro. The polypeptide is Serpin-ZX (PAZX) (Hordeum vulgare (Barley)).